Reading from the N-terminus, the 336-residue chain is Phenylalanine--tRNA ligase alpha subunit (336 aa).

Mg(2+) is bound at residue glutamate 255.

Belongs to the class-II aminoacyl-tRNA synthetase family. Phe-tRNA synthetase alpha subunit type 1 subfamily. In terms of assembly, tetramer of two alpha and two beta subunits. The cofactor is Mg(2+).

The protein localises to the cytoplasm. The catalysed reaction is tRNA(Phe) + L-phenylalanine + ATP = L-phenylalanyl-tRNA(Phe) + AMP + diphosphate + H(+). This Gemmatimonas aurantiaca (strain DSM 14586 / JCM 11422 / NBRC 100505 / T-27) protein is Phenylalanine--tRNA ligase alpha subunit.